The primary structure comprises 611 residues: Glutamine--fructose-6-phosphate aminotransferase [isomerizing] (611 aa).

Cysteine 2 functions as the Nucleophile; for GATase activity in the catalytic mechanism. In terms of domain architecture, Glutamine amidotransferase type-2 spans cysteine 2–aspartate 219. SIS domains follow at residues alanine 287–serine 427 and valine 460–proline 601. The active-site For Fru-6P isomerization activity is the lysine 606.

In terms of assembly, homodimer.

The protein resides in the cytoplasm. It carries out the reaction D-fructose 6-phosphate + L-glutamine = D-glucosamine 6-phosphate + L-glutamate. In terms of biological role, catalyzes the first step in hexosamine metabolism, converting fructose-6P into glucosamine-6P using glutamine as a nitrogen source. This chain is Glutamine--fructose-6-phosphate aminotransferase [isomerizing], found in Pseudomonas syringae pv. tomato (strain ATCC BAA-871 / DC3000).